Reading from the N-terminus, the 507-residue chain is MEEIQRYLQLKRSQQHDFLYPLIFQEYIYAFAHDRDFGRSILSENLGSKSKSSLLVVKRLISRMYQQNRFILSLNDSNQNPFWTCNNNFDSQIISEGFALIGEIPFSLRFKSCLEEKNKVNSQSLRSIHSIFPFLEDNFSHLNYILDILITHPVHVEILVQNLRYWLKDASSLHLLRFLLNDYWNSLITPKKASSSFSKKNQRLFLFLYNSHVCEYEYFFVFIRKQSSHLLSTSYGVFLERIYCYEKVERLXNVFIKVKDLQANLWLVKEPCMHYVRYQRKFILASKGTSVLMNKWKCYLVTFWQWHFSLWFHPRRIYINQLSNHSLEFLGYLSSVRMNPSVVRSQILENSFLINNGIKKLETLVPIFLLITSLAKAKFCNVLGHPISKPVWADLSDSNIIDRFGRISRNLSHYYSGSSKKKSLYRVKYILRLSCARTLARKHKSTVRAFLKRLGSELLEEFLMSEEDILSLTFPKPSSTLRGVYRSRIWYLDIIWINDLANYKSKI.

It belongs to the intron maturase 2 family. MatK subfamily.

It localises to the plastid. It is found in the chloroplast. Its function is as follows. Usually encoded in the trnK tRNA gene intron. Probably assists in splicing its own and other chloroplast group II introns. The protein is Maturase K of Craterostigma plantagineum (Blue gem).